Here is a 571-residue protein sequence, read N- to C-terminus: Cilia- and flagella-associated protein 52 (571 aa).

WD repeat units follow at residues 62–106 (GHGN…LLAR), 109–150 (LHKG…AICG), 156–195 (LNVG…RKIW), 288–327 (QSQG…ETLI), 330–364 (CHFE…TSSN), 366–405 (AHRI…QKLE), 410–449 (EHKS…RNQM), 451–490 (LANT…VIRE), 494–533 (SLSG…VTHV), and 536–571 (GHSG…PYTS).

Belongs to the CFAP52 family. Microtubule inner protein component of sperm flagellar doublet microtubules. Interacts with BRCA2. Interacts with the CCT chaperonin complex. Interacts with HSP70. Interacts with AK8. Interacts with CFAP45. Interacts with DNAI1. Interacts with IQDC.

The protein localises to the cytoplasm. The protein resides in the cytoskeleton. It localises to the cilium axoneme. Its subcellular location is the flagellum axoneme. In terms of biological role, microtubule inner protein (MIP) part of the dynein-decorated doublet microtubules (DMTs) in cilia axoneme. Important for proper ciliary and flagellar beating. May act in cooperation with CFAP45 and axonemal dynein subunit DNAH11. May play a role in cell growth and/or survival. The protein is Cilia- and flagella-associated protein 52 of Macaca fascicularis (Crab-eating macaque).